The primary structure comprises 450 residues: MQHHDIPGAAPQPIDKLLAPFRRFFAIEASSGILLMAATVLALVWANSGFSASYHALWSNKVTVGFGDYALSKALILWINDGLMAIFFFVVGLEIKREILAGELASPRQAALPIAAAIGGMLVPAGIYLALNGGTAAASGWGVPMATDIAFALGILSLLGDRVPLSLKVFLTAVAIVDDLGAILVIAFFYTANLSFSFLMLGFAAFAVMLLLNWLGVRRVTPYLLVGLVLWFALLKSGVHATIAGVLGAMAIPARSALAPAVLRGTARQALSVFENALQGDTPVLASQDKSHAIHHVEMLTEKAGTPLQRLEHALHPWVAWFIMPVFALANAGVTVSAEMVSMLFEPLSLGIFFGLLLGKQGGVTLAVWLLVKTGIAKLPKGVGLGMYYGIGWLAGIGFTMAIFIATLAFEDPAHIEAAKMSILCASFVAGFGGYMLMRVLLRGREPEKA.

Transmembrane regions (helical) follow at residues 24 to 44, 75 to 95, 111 to 131, 140 to 160, 169 to 189, 196 to 216, 224 to 244, 318 to 338, 352 to 372, 390 to 410, and 422 to 442; these read FFAIEASSGILLMAATVLALV, LILWINDGLMAIFFFVVGLEI, ALPIAAAIGGMLVPAGIYLAL, GWGVPMATDIAFALGILSLLG, VFLTAVAIVDDLGAILVIAFF, FSFLMLGFAAFAVMLLLNWLG, LLVGLVLWFALLKSGVHATIA, WVAWFIMPVFALANAGVTVSA, IFFGLLLGKQGGVTLAVWLLV, GIGWLAGIGFTMAIFIATLAF, and SILCASFVAGFGGYMLMRVLL.

The protein belongs to the NhaA Na(+)/H(+) (TC 2.A.33) antiporter family.

The protein localises to the cell inner membrane. The enzyme catalyses Na(+)(in) + 2 H(+)(out) = Na(+)(out) + 2 H(+)(in). Na(+)/H(+) antiporter that extrudes sodium in exchange for external protons. The polypeptide is Na(+)/H(+) antiporter NhaA (Oleidesulfovibrio alaskensis (strain ATCC BAA-1058 / DSM 17464 / G20) (Desulfovibrio alaskensis)).